A 391-amino-acid polypeptide reads, in one-letter code: Putative B3 domain-containing protein Os08g0325100 (391 aa).

Residues 32–125 (GDFQHEIRGE…QFDVIIFDQV (94 aa)) constitute a DNA-binding region (TF-B3). Residues 143–232 (VQEGRTDATE…SSRAHPQPMP (90 aa)) form a disordered region. Residues 172–226 (EGRTNATETLNSSRAHSQPMPMQTPATETLNSSRAHSQDMPMQSPATETLNSSRA) show a composition bias toward polar residues.

Its subcellular location is the nucleus. This chain is Putative B3 domain-containing protein Os08g0325100, found in Oryza sativa subsp. japonica (Rice).